The following is a 187-amino-acid chain: Insulin-like growth factor 2 (187 aa).

An N-terminal signal peptide occupies residues 1–23; the sequence is MCAARQILLLLLAFLAYALDSAA. The interval 25–51 is b; the sequence is YGTAETLCGGELVDTLQFVCGDRGFYF. 3 disulfide bridges follow: cysteine 32-cysteine 71, cysteine 44-cysteine 84, and cysteine 70-cysteine 75. The segment at 52–64 is c; it reads SRPVGRNNRRINR. The a stretch occupies residues 64–85; sequence RGIVEECCFRSCDLALLETYCA. A d region spans residues 86 to 91; that stretch reads KSVKSE. Residues 92-187 constitute a propeptide, e peptide; it reads RDLSATSLAG…ASPEATGPQE (96 aa). Positions 162 to 187 are disordered; the sequence is HRPLISLPSQRPPAPRASPEATGPQE.

It belongs to the insulin family.

It is found in the secreted. Functionally, the insulin-like growth factors, isolated from plasma, are structurally and functionally related to insulin but have a much higher growth-promoting activity. Acts as a ligand for integrin which is required for IGF2 signaling. This chain is Insulin-like growth factor 2, found in Gallus gallus (Chicken).